We begin with the raw amino-acid sequence, 1481 residues long: Cystic fibrosis transmembrane conductance regulator (1481 aa).

At 1–77 (MQRSPLEKAS…KLINALRRCF (77 aa)) the chain is on the cytoplasmic side. The helical transmembrane segment at 78 to 98 (FWRFMFYGILLYLGEVTKAVQ) threads the bilayer. The 285-residue stretch at 81-365 (FMFYGILLYL…WAVQTWYDSL (285 aa)) folds into the ABC transmembrane type-1 1 domain. At 99-122 (PLLLGRIIASYDPDNKVERSIAIY) the chain is on the extracellular side. The chain crosses the membrane as a helical span at residues 123 to 146 (LGIGLCLLFIVRMLLLHPAIFGLH). Residues 147-195 (HIGMQMRIAMFSLIYKKILKLSSRVLDKISIGQLVSLLSNNLNKFDEGL) are Cytoplasmic-facing. A helical transmembrane segment spans residues 196–216 (ALAHFVWIAPLQVMLLMGLLW). The Extracellular portion of the chain corresponds to 217-222 (ELLQAS). A helical transmembrane segment spans residues 223–243 (AFCGLGFLIVLALFQSGLGRM). Topologically, residues 244–298 (MMKYRDQRAGKINERLVITSEMIENIQSVKAYCWEEAMEKMIENLRQTELKLTRK) are cytoplasmic. The helical transmembrane segment at 299–319 (AAYVRYFNSSAFFFSGFFVVF) threads the bilayer. Topologically, residues 320-339 (LSVLPYALIKGIILRKIFTT) are extracellular. A helical transmembrane segment spans residues 340–358 (ISFCIVLRMAVTRQFPWAV). Residues 359-858 (QTWYDSLGAI…YLRYITVHKS (500 aa)) are Cytoplasmic-facing. Residues Trp-401, 458 to 465 (GSTGAGKT), and Gln-493 contribute to the ATP site. One can recognise an ABC transporter 1 domain in the interval 423–646 (NGDNSLFFSN…RPDFSSKLMG (224 aa)). A lipid anchor (S-palmitoyl cysteine) is attached at Cys-524. Residues Ser-549 and Ser-660 each carry the phosphoserine modification. The segment at 654–831 (SAERRNSILT…EEINEEDLKE (178 aa)) is disordered R region. Position 670 is a phosphoserine; by PKA (Ser-670). Ser-686 is modified (phosphoserine). Lys-688 participates in a covalent cross-link: Glycyl lysine isopeptide (Lys-Gly) (interchain with G-Cter in ubiquitin). Phosphoserine occurs at positions 700 and 712. Thr-717 is modified (phosphothreonine). Phosphoserine is present on residues Ser-737, Ser-768, Ser-790, Ser-795, and Ser-813. The chain crosses the membrane as a helical span at residues 859–879 (LIFVLIWCLVIFLAEVAVSLV). The ABC transmembrane type-1 2 domain maps to 859–1155 (LIFVLIWCLV…AVNSSIDVDS (297 aa)). At 880 to 918 (LLWLLGNAPAYNKGNSTISANSSYAVIITSTSAYYVFYI) the chain is on the extracellular side. 2 N-linked (GlcNAc...) asparagine glycosylation sites follow: Asn-894 and Asn-900. Residues 919–939 (YVGVADTLLALGFFRGLPLVH) traverse the membrane as a discontinuously helical segment. Over 940-990 (TLITVSKILHHKMLHSVLQAPMSTLNALKAGGILNRFSKDIAILDDLLPLT) the chain is Cytoplasmic. Residues 991-1011 (IFDFIQLLLIVIGAVAVVSVL) traverse the membrane as a helical segment. Residues 1012–1013 (QP) are Extracellular-facing. The chain crosses the membrane as a helical span at residues 1014–1034 (YIFLATVPVIVTFIILRAYFL). The Cytoplasmic portion of the chain corresponds to 1035–1095 (HTSQQLKQLE…TANWFLYLST (61 aa)). A helical membrane pass occupies residues 1096–1116 (LRWFQMRIEMVFVIFFIVVTF). At 1117 to 1130 (ISILTTGEGEGQVG) the chain is on the extracellular side. A helical membrane pass occupies residues 1131–1151 (IILTLAMNIMGTLQWAVNSSI). At 1152–1481 (DVDSLMRSVS…TEEEVQDTRL (330 aa)) the chain is on the cytoplasmic side. The 234-residue stretch at 1211–1444 (MTVKDLTARY…KSLFRQAISP (234 aa)) folds into the ABC transporter 2 domain. ATP is bound by residues Tyr-1220 and 1245–1252 (GRTGSGKS). The segment at 1387–1481 (RTLKQAFADC…TEEEVQDTRL (95 aa)) is interaction with GORASP2. Cys-1396 is lipidated: S-palmitoyl cysteine. 2 positions are modified to phosphoserine: Ser-1445 and Ser-1457. Positions 1449-1481 (KLFPRRNSSKHKSRPPITALKEETEEEVQDTRL) are disordered. Residues 1450-1462 (LFPRRNSSKHKSR) show a composition bias toward basic residues. Over residues 1471–1481 (ETEEEVQDTRL) the composition is skewed to acidic residues. The PDZ-binding motif lies at 1479–1481 (TRL).

It belongs to the ABC transporter superfamily. ABCC family. CFTR transporter (TC 3.A.1.202) subfamily. Monomer; does not require oligomerization for channel activity. May form oligomers in the membrane. Interacts with SLC26A3, SLC26A6 and NHERF1. Interacts with SHANK2. Interacts with MYO6. Interacts (via C-terminus) with GOPC (via PDZ domain); this promotes CFTR internalization and thereby decreases channel activity. Interacts with SLC4A7 through NHERF1. Found in a complex with MYO5B and RAB11A. Interacts with ANO1. Interacts with SLC26A8. Interacts with AHCYL1; the interaction increases CFTR activity. Interacts with CSE1L. The core-glycosylated form interacts with GORASP2 (via PDZ GRASP-type 1 domain) in respone to ER stress. Interacts with MARCHF2; the interaction leads to CFTR ubiqtuitination and degradation. Interacts with ADGRG2. In terms of processing, N-glycosylated. Phosphorylated; cAMP treatment promotes phosphorylation and activates the channel. Dephosphorylation decreases the ATPase activity (in vitro). Phosphorylation at PKA sites activates the channel. Phosphorylation at PKC sites enhances the response to phosphorylation by PKA. Phosphorylated by AMPK; this inhibits channel activity. Post-translationally, ubiquitinated, leading to its degradation in the lysosome. Deubiquitination by USP10 in early endosomes enhances its endocytic recycling to the cell membrane. Ubiquitinated by RNF185 during ER stress. Ubiquitinated by MARCHF2.

It localises to the apical cell membrane. The protein resides in the early endosome membrane. It is found in the cell membrane. The protein localises to the recycling endosome membrane. Its subcellular location is the endoplasmic reticulum membrane. It localises to the nucleus. It catalyses the reaction ATP + H2O + closed Cl(-) channel = ADP + phosphate + open Cl(-) channel.. It carries out the reaction chloride(in) = chloride(out). The catalysed reaction is hydrogencarbonate(in) = hydrogencarbonate(out). The enzyme catalyses ATP + H2O = ADP + phosphate + H(+). Epithelial ion channel that plays an important role in the regulation of epithelial ion and water transport and fluid homeostasis. Mediates the transport of chloride ions across the cell membrane. Possesses an intrinsic ATPase activity and utilizes ATP to gate its channel; the passive flow of anions through the channel is gated by cycles of ATP binding and hydrolysis by the ATP-binding domains. The ion channel is also permeable to HCO(3)(-); selectivity depends on the extracellular chloride concentration. Exerts its function also by modulating the activity of other ion channels and transporters. Contributes to the regulation of the pH and the ion content of the epithelial fluid layer. Modulates the activity of the epithelial sodium channel (ENaC) complex, in part by regulating the cell surface expression of the ENaC complex. May regulate bicarbonate secretion and salvage in epithelial cells by regulating the transporter SLC4A7. Can inhibit the chloride channel activity of ANO1. Plays a role in the chloride and bicarbonate homeostasis during sperm epididymal maturation and capacitation. In Microcebus murinus (Gray mouse lemur), this protein is Cystic fibrosis transmembrane conductance regulator.